A 541-amino-acid polypeptide reads, in one-letter code: GMP synthase [glutamine-hydrolyzing] (541 aa).

The 196-residue stretch at 17-212 folds into the Glutamine amidotransferase type-1 domain; sequence TILVLDFGSQ…AVDICQSTTD (196 aa). Residue C93 is the Nucleophile of the active site. Active-site residues include H186 and E188. Residues 213–416 enclose the GMPS ATP-PPase domain; that stretch reads WTMGKFVDQE…LGIPEDLVWR (204 aa). 241–247 is a binding site for ATP; the sequence is SGGVDST. R315, D478, K533, and E539 together coordinate XMP.

In terms of assembly, homodimer. Requires Mg(2+) as cofactor.

It localises to the cytoplasm. Its subcellular location is the cytosol. It carries out the reaction XMP + L-glutamine + ATP + H2O = GMP + L-glutamate + AMP + diphosphate + 2 H(+). The protein operates within purine metabolism; GMP biosynthesis; GMP from XMP (L-Gln route): step 1/1. Its function is as follows. Catalyzes the conversion of xanthine monophosphate (XMP) to GMP in the presence of glutamine and ATP through an adenyl-XMP intermediate. This Phaeosphaeria nodorum (strain SN15 / ATCC MYA-4574 / FGSC 10173) (Glume blotch fungus) protein is GMP synthase [glutamine-hydrolyzing] (GUA1).